A 70-amino-acid chain; its full sequence is NADH dehydrogenase [ubiquinone] 1 alpha subcomplex subunit 1 (70 aa).

Residues 1–21 (MWFEILPGLAIMGVCLVIPGV) form a helical membrane-spanning segment.

It belongs to the complex I NDUFA1 subunit family. As to quaternary structure, complex I is composed of 45 different subunits.

It is found in the mitochondrion inner membrane. Its function is as follows. Accessory subunit of the mitochondrial membrane respiratory chain NADH dehydrogenase (Complex I), that is believed not to be involved in catalysis. Complex I functions in the transfer of electrons from NADH to the respiratory chain. The immediate electron acceptor for the enzyme is believed to be ubiquinone. In Mus musculus (Mouse), this protein is NADH dehydrogenase [ubiquinone] 1 alpha subcomplex subunit 1 (Ndufa1).